We begin with the raw amino-acid sequence, 216 residues long: FMN-dependent NADH:quinone oxidoreductase 2 (216 aa).

Residues Ser9, 15–17 (SVS), 96–99 (MYNF), and 140–143 (SRGG) each bind FMN.

This sequence belongs to the azoreductase type 1 family. As to quaternary structure, homodimer. FMN serves as cofactor.

It carries out the reaction 2 a quinone + NADH + H(+) = 2 a 1,4-benzosemiquinone + NAD(+). It catalyses the reaction N,N-dimethyl-1,4-phenylenediamine + anthranilate + 2 NAD(+) = 2-(4-dimethylaminophenyl)diazenylbenzoate + 2 NADH + 2 H(+). Functionally, quinone reductase that provides resistance to thiol-specific stress caused by electrophilic quinones. Also exhibits azoreductase activity. Catalyzes the reductive cleavage of the azo bond in aromatic azo compounds to the corresponding amines. This is FMN-dependent NADH:quinone oxidoreductase 2 from Xanthomonas euvesicatoria pv. vesicatoria (strain 85-10) (Xanthomonas campestris pv. vesicatoria).